The following is a 132-amino-acid chain: Aspartate 1-decarboxylase (132 aa).

Ser25 functions as the Schiff-base intermediate with substrate; via pyruvic acid in the catalytic mechanism. The residue at position 25 (Ser25) is a Pyruvic acid (Ser). Residue Thr57 coordinates substrate. Catalysis depends on Tyr58, which acts as the Proton donor. 73 to 75 (GAA) contributes to the substrate binding site.

The protein belongs to the PanD family. In terms of assembly, heterooctamer of four alpha and four beta subunits. Requires pyruvate as cofactor. Is synthesized initially as an inactive proenzyme, which is activated by self-cleavage at a specific serine bond to produce a beta-subunit with a hydroxyl group at its C-terminus and an alpha-subunit with a pyruvoyl group at its N-terminus.

It localises to the cytoplasm. The catalysed reaction is L-aspartate + H(+) = beta-alanine + CO2. It participates in cofactor biosynthesis; (R)-pantothenate biosynthesis; beta-alanine from L-aspartate: step 1/1. Functionally, catalyzes the pyruvoyl-dependent decarboxylation of aspartate to produce beta-alanine. The protein is Aspartate 1-decarboxylase of Heliobacterium modesticaldum (strain ATCC 51547 / Ice1).